Reading from the N-terminus, the 59-residue chain is Small ribosomal subunit protein bS21 (59 aa).

Residues 40–59 form a disordered region; the sequence is KPSVKRKKKSEAARKRKSFR. Residues 43 to 59 are compositionally biased toward basic residues; that stretch reads VKRKKKSEAARKRKSFR.

This sequence belongs to the bacterial ribosomal protein bS21 family.

The protein is Small ribosomal subunit protein bS21 of Desulforamulus reducens (strain ATCC BAA-1160 / DSM 100696 / MI-1) (Desulfotomaculum reducens).